A 525-amino-acid chain; its full sequence is Asparagine synthetase domain-containing protein YML096W (525 aa).

Residue Cys2 is the For GATase activity of the active site. The Glutamine amidotransferase type-2 domain occupies 2–209 (CGILLHYCPN…LNSNQRSHLP (208 aa)). The 314-residue stretch at 210 to 523 (YEVTSEIDLN…GTDLLKENRN (314 aa)) folds into the Asparagine synthetase domain. A disordered region spans residues 503–525 (SAKMTKDGNKHGTDLLKENRNCS). Residues 506-525 (MTKDGNKHGTDLLKENRNCS) are compositionally biased toward basic and acidic residues.

The protein resides in the cytoplasm. The protein is Asparagine synthetase domain-containing protein YML096W of Saccharomyces cerevisiae (strain ATCC 204508 / S288c) (Baker's yeast).